A 982-amino-acid polypeptide reads, in one-letter code: Filament-like plant protein 4 (982 aa).

Coiled coils occupy residues 39 to 83 and 125 to 291; these read DQYT…VAKE and EDRA…RKKL. Residues 311–333 are disordered; sequence DHRQDHRQRRSPVRPSSPLMSPM. Positions 323–333 are enriched in low complexity; the sequence is VRPSSPLMSPM. Residues 345–401 are a coiled coil; it reads DNMQKFHKENDLLTERLLAMEEETKMLKEALAKRNSELQVSRNLCAKTANRLQTLEA. Residues 423–433 are compositionally biased toward polar residues; sequence QNASNPPSMAS. Disordered stretches follow at residues 423-466 and 687-711; these read QNAS…AKIK and QKDS…PDDC. Residues 452–475 are a coiled coil; the sequence is ELSQSNKDKANAKIKKTESANQLE. Residues 457-466 are compositionally biased toward basic and acidic residues; sequence NKDKANAKIK. Residues 693-705 show a composition bias toward polar residues; sequence EHYQNGCSQSSDS. Residues 722–885 are a coiled coil; sequence ATCKFTTEEF…AECQETILLL (164 aa). Polar residues-rich tracts occupy residues 896–910 and 918–943; these read TEQV…QQAL and ATST…NTMK. Residues 896–982 are disordered; it reads TEQVASSPSQ…FSRFFSTKAK (87 aa).

This sequence belongs to the FPP family. As to quaternary structure, interacts with WPP/MAF proteins.

The sequence is that of Filament-like plant protein 4 (FPP4) from Arabidopsis thaliana (Mouse-ear cress).